The chain runs to 869 residues: Speckle targeted PIP5K1A-regulated poly(A) polymerase (869 aa).

Residues 16–46 (FRCCLCHVTTANRPSLDAHLGGRKHRHLVEL) form a Matrin-type zinc finger. Residues 56 to 128 (RSVFVSGFPR…HRLRVRPREQ (73 aa)) enclose the RRM domain. The interval 111–147 (QPQHTLGGHRLRVRPREQKEFQSPASKSPKGAAPDSH) is disordered. Residue Ser-205 participates in ATP binding. Residues Asp-216 and Asp-218 each coordinate Mg(2+). The UTP site is built by Asp-216 and Asp-218. The disordered stretch occupies residues 252–315 (QALACTPASP…PASPLQEDRG (64 aa)). Residues 259 to 269 (ASPPDSQPPSP) are compositionally biased toward pro residues. Residues 279–290 (TPSSSLAPQTPD) show a composition bias toward polar residues. Residue Asn-391 participates in ATP binding. The UTP site is built by Asn-391, Arg-413, Tyr-431, and His-548. The 59-residue stretch at 490–548 (LSSLLAQFFSCVSCWDLRGSLLSLREGQALPVAGDLPSNRWEGLRLGPMNLQDPFDLSH) folds into the PAP-associated domain. The KA1; binds the bulging loops of U6 snRNA but is dispensable for terminal uridylyltransferase activity stretch occupies residues 597–869 (SSPSSLLSAT…VFLPQALRNL (273 aa)). Composition is skewed to basic and acidic residues over residues 637–648 (GTKRLRSDRGGP) and 660–686 (LKLD…HSED). Disordered stretches follow at residues 637–686 (GTKR…HSED) and 720–755 (LATG…TGRG). 2 positions are modified to phosphoserine: Ser-684 and Ser-748.

It belongs to the DNA polymerase type-B-like family. In terms of assembly, associates with the cleavage and polyadenylation specificity factor (CPSF) complex. Interacts with CPSF1 and CPSF3; the interaction is direct. Interacts with PIP5K1A. Mg(2+) serves as cofactor. The cofactor is Mn(2+). In terms of processing, phosphorylated by CK1 in the proline-rich (Pro-rich) region.

It localises to the nucleus. The protein resides in the nucleolus. The protein localises to the nucleus speckle. The catalysed reaction is RNA(n) + UTP = RNA(n)-3'-uridine ribonucleotide + diphosphate. It catalyses the reaction RNA(n) + ATP = RNA(n)-3'-adenine ribonucleotide + diphosphate. Its activity is regulated as follows. Adenylyltransferase activity is specifically phosphatidylinositol 4,5-bisphosphate (PtdIns(4,5)P2). Poly(A) polymerase that creates the 3'-poly(A) tail of specific pre-mRNAs. Localizes to nuclear speckles together with PIP5K1A and mediates polyadenylation of a select set of mRNAs, such as HMOX1. In addition to polyadenylation, it is also required for the 3'-end cleavage of pre-mRNAs: binds to the 3'UTR of targeted pre-mRNAs and promotes the recruitment and assembly of the CPSF complex on the 3'UTR of pre-mRNAs. In addition to adenylyltransferase activity, also has uridylyltransferase activity. However, the ATP ratio is higher than UTP in cells, suggesting that it functions primarily as a poly(A) polymerase. Acts as a specific terminal uridylyltransferase for U6 snRNA in vitro: responsible for a controlled elongation reaction that results in the restoration of the four 3'-terminal UMP-residues found in newly transcribed U6 snRNA. Not involved in replication-dependent histone mRNA degradation. The chain is Speckle targeted PIP5K1A-regulated poly(A) polymerase (TUT1) from Ailuropoda melanoleuca (Giant panda).